We begin with the raw amino-acid sequence, 185 residues long: Ribosome-recycling factor (185 aa).

The protein belongs to the RRF family.

It localises to the cytoplasm. Its function is as follows. Responsible for the release of ribosomes from messenger RNA at the termination of protein biosynthesis. May increase the efficiency of translation by recycling ribosomes from one round of translation to another. This is Ribosome-recycling factor from Syntrophus aciditrophicus (strain SB).